We begin with the raw amino-acid sequence, 443 residues long: ATP-dependent protease ATPase subunit HslU (443 aa).

ATP is bound by residues I18, G60 to E65, D256, E321, and R393.

It belongs to the ClpX chaperone family. HslU subfamily. A double ring-shaped homohexamer of HslV is capped on each side by a ring-shaped HslU homohexamer. The assembly of the HslU/HslV complex is dependent on binding of ATP.

The protein localises to the cytoplasm. ATPase subunit of a proteasome-like degradation complex; this subunit has chaperone activity. The binding of ATP and its subsequent hydrolysis by HslU are essential for unfolding of protein substrates subsequently hydrolyzed by HslV. HslU recognizes the N-terminal part of its protein substrates and unfolds these before they are guided to HslV for hydrolysis. This chain is ATP-dependent protease ATPase subunit HslU, found in Escherichia fergusonii (strain ATCC 35469 / DSM 13698 / CCUG 18766 / IAM 14443 / JCM 21226 / LMG 7866 / NBRC 102419 / NCTC 12128 / CDC 0568-73).